The chain runs to 58 residues: UPF0434 protein Daro_3207 (58 aa).

It belongs to the UPF0434 family.

The polypeptide is UPF0434 protein Daro_3207 (Dechloromonas aromatica (strain RCB)).